The chain runs to 158 residues: Leptin-B (158 aa).

Residues 1–19 (MYMPLALVYASFLTLPAST) form the signal peptide. A disulfide bridge connects residues Cys-114 and Cys-158.

It belongs to the leptin family. In terms of tissue distribution, highly expressed in the brain and eye. Expressed at low levels in muscle and skin.

It localises to the secreted. Its function is as follows. May function as part of a signaling pathway that acts to regulate the size of the body fat depot. In Oryzias latipes (Japanese rice fish), this protein is Leptin-B.